We begin with the raw amino-acid sequence, 330 residues long: Aspartate--ammonia ligase (330 aa).

Belongs to the class-II aminoacyl-tRNA synthetase family. AsnA subfamily.

Its subcellular location is the cytoplasm. It catalyses the reaction L-aspartate + NH4(+) + ATP = L-asparagine + AMP + diphosphate + H(+). Its pathway is amino-acid biosynthesis; L-asparagine biosynthesis; L-asparagine from L-aspartate (ammonia route): step 1/1. The polypeptide is Aspartate--ammonia ligase (Klebsiella pneumoniae (strain 342)).